We begin with the raw amino-acid sequence, 232 residues long: MASSSDSWMRAYNEALKLSEEINGMISERSSSAVTGPDAQRRASAIRRKITIFGNKLDSLQSLLAEIHGKPISEKEMNRRKDMVGNLRSKANQMANALNMSNFANRDSLLGPDIKPDDSMSRVTGMDNQGIVGYQRQVMREQDEGLEQLEGTVMSTKHIALAVSEELDLQTRLIDDLDYHVDVTDSRLRRVQKSLAVMNKNMRSGCSCMSMLLSVLGIVGLAVVIWMLVKYM.

Residues 1–208 lie on the Cytoplasmic side of the membrane; the sequence is MASSSDSWMR…NKNMRSGCSC (208 aa). Positions 136-198 constitute a t-SNARE coiled-coil homology domain; the sequence is RQVMREQDEG…RRVQKSLAVM (63 aa). Residues 209 to 229 traverse the membrane as a helical; Anchor for type IV membrane protein segment; sequence MSMLLSVLGIVGLAVVIWMLV. At 230–232 the chain is on the vesicular side; sequence KYM.

This sequence belongs to the syntaxin family. Interacts with VTI11 and either SYP21, or SYP22, or SYP61 in the prevacuolar compartment, or with VTI12 and SYP61 in the trans-Golgi network to form t-SNARE complexes. Expressed in root, leaf, stem, flower and silique.

It is found in the golgi apparatus. The protein resides in the trans-Golgi network membrane. Its subcellular location is the prevacuolar compartment membrane. In terms of biological role, vesicle trafficking protein that functions in the secretory pathway. The polypeptide is Syntaxin-51 (SYP51) (Arabidopsis thaliana (Mouse-ear cress)).